A 283-amino-acid chain; its full sequence is MYHDVSYLLSRLINGPLSLRQIYFASSNGPVPDLAYQVDFPRLEIVLEGEFVDTGAGATLVPGDVLYVPAGGWNFPQWQAPATTFSVLFGKQQLGFSVVQWDGKQYQNLAKQHVARRGPRIGSFLLQTLNEMQMQPQEQQTARLIVASLLSHCRDLLGSQIQTASRSQALFEAIRDYIDERYASALTRESVAQAFYISPNYLSHLFQKTGAIGFNEYLNHTRLEHAKTLLKGYDLKVKEVAHACGFVDSNYFCRLFRKNTERSPSEYRRQYHSQLTEKPTTPE.

An HTH araC/xylS-type domain is found at 172–270 (EAIRDYIDER…ERSPSEYRRQ (99 aa)). DNA-binding regions (H-T-H motif) lie at residues 189 to 210 (ESVA…QKTG) and 237 to 260 (VKEV…RKNT).

This is an uncharacterized protein from Escherichia coli (strain K12).